A 129-amino-acid polypeptide reads, in one-letter code: ATP synthase epsilon chain (129 aa).

Belongs to the ATPase epsilon chain family. F-type ATPases have 2 components, CF(1) - the catalytic core - and CF(0) - the membrane proton channel. CF(1) has five subunits: alpha(3), beta(3), gamma(1), delta(1), epsilon(1). CF(0) has three main subunits: a, b and c.

It is found in the cell inner membrane. Produces ATP from ADP in the presence of a proton gradient across the membrane. This Campylobacter concisus (strain 13826) protein is ATP synthase epsilon chain.